The primary structure comprises 627 residues: DNA mismatch repair protein MutL (627 aa).

The interval 363 to 397 (FAEPAAREPVAPRYSPAPASGSRPAAPWPNAQPGY) is disordered. The span at 364–387 (AEPAAREPVAPRYSPAPASGSRPA) shows a compositional bias: low complexity.

It belongs to the DNA mismatch repair MutL/HexB family.

In terms of biological role, this protein is involved in the repair of mismatches in DNA. It is required for dam-dependent methyl-directed DNA mismatch repair. May act as a 'molecular matchmaker', a protein that promotes the formation of a stable complex between two or more DNA-binding proteins in an ATP-dependent manner without itself being part of a final effector complex. The sequence is that of DNA mismatch repair protein MutL from Shigella flexneri serotype 5b (strain 8401).